The sequence spans 306 residues: Ribosomal protein L11 methyltransferase (306 aa).

S-adenosyl-L-methionine is bound by residues Thr-154, Gly-179, Asp-201, and Asn-242.

It belongs to the methyltransferase superfamily. PrmA family.

It localises to the cytoplasm. The catalysed reaction is L-lysyl-[protein] + 3 S-adenosyl-L-methionine = N(6),N(6),N(6)-trimethyl-L-lysyl-[protein] + 3 S-adenosyl-L-homocysteine + 3 H(+). In terms of biological role, methylates ribosomal protein L11. The protein is Ribosomal protein L11 methyltransferase of Xanthomonas campestris pv. campestris (strain 8004).